The chain runs to 157 residues: uncharacterized protein (157 aa).

Positions 9 to 154 constitute an N-acetyltransferase domain; it reads LLINYKTLDE…ETNLNAVTNE (146 aa).

This is an uncharacterized protein from Bacillus cereus (strain ATCC 14579 / DSM 31 / CCUG 7414 / JCM 2152 / NBRC 15305 / NCIMB 9373 / NCTC 2599 / NRRL B-3711).